The sequence spans 610 residues: Probable pleckstrin homology domain-containing family N member 1 (610 aa).

The segment at 1 to 30 (MGNSHCVPQAPRRLRASFSRKPSLKGNRED) is disordered. G2 carries N-myristoyl glycine lipidation. Positions 61–100 (TDIPGPEHHPENLEQPFLSVFKKGWRRTPVRNLGKVVHYS) are interaction with C1QBP. 2 PH domains span residues 96–192 (VVHY…MALL) and 227–324 (AICA…SRRD). Phosphotyrosine is present on Y307. Disordered stretches follow at residues 327–357 (HLPP…SNGR), 371–431 (QSLP…PLPL), 443–473 (LDSG…ATSR), and 493–610 (PGPD…IQWI). Composition is skewed to polar residues over residues 371–380 (QSLPESSVPT) and 391–402 (NQTDSNCVSTGQ). At Y462 the chain carries Phosphotyrosine. The segment covering 504–526 (VSVSVPVSESSSGISSSPGPLGS) has biased composition (low complexity).

As to quaternary structure, found in a complex with cytochrome c mRNA and various ribosomal proteins. Interacts with C1QBP, ELAVL1 and BID. Post-translationally, phosphorylation is essential for its mitochondrial localization and regulates its interaction with C1QBP. In terms of tissue distribution, testis and adipose tissue (at protein level). Ubiquitous.

Its subcellular location is the cell membrane. The protein resides in the mitochondrion membrane. It is found in the mitochondrion. In terms of biological role, controls the stability of the leptin mRNA harboring an AU-rich element (ARE) in its 3' UTR, in cooperation with the RNA stabilizer ELAVL1. Decreases the stability of the leptin mRNA by antagonizing the function of ELAVL1 by inducing its atypical recruitment from the nucleus to the cytosol. Binds to cardiolipin (CL), phosphatidic acid (PA), phosphatidylinositol 4-phosphate (PtdIns(4)P) and phosphatidylserine (PS). This is Probable pleckstrin homology domain-containing family N member 1 (Plekhn1) from Mus musculus (Mouse).